The sequence spans 1438 residues: Pyochelin synthetase PchE (1438 aa).

Residues 6–85 (DSRTALRDWL…AWLDLLACAD (80 aa)) enclose the Carrier 1 domain. At S46 the chain carries O-(pantetheine 4'-phosphoryl)serine. The segment at 136-442 (RTRDVDPQRL…ARRQGQPRSA (307 aa)) is condensation/cyclization. The tract at residues 563–950 (RAAEAPDADA…GRVDQQVKVR (388 aa)) is adenylation. Residues 1350 to 1425 (EPLEAHEQAL…GLARHLQAQT (76 aa)) enclose the Carrier 2 domain. S1385 is modified (O-(pantetheine 4'-phosphoryl)serine).

It belongs to the NRP synthetase family. Pantetheine 4'-phosphate is required as a cofactor.

The catalysed reaction is holo-[peptidyl-carrier protein] + L-cysteine + ATP = L-cysteinyl-[peptidyl-carrier protein] + AMP + diphosphate. It functions in the pathway siderophore biosynthesis. Its pathway is antifungal biosynthesis. In terms of biological role, involved in the biosynthesis of the siderophore pyochelin. Accepts salicylate activated by PchD at the first peptidyl carrier domain (ArCP), and activates and fixes one molecule of cysteine at the second peptidyl carrier domain (PCP1) via a thioester linkage to the phosphopanthetheine moiety. Then catalyzes the condensation reaction between the salicylate bound to the first site and the cysteine bound to the second site, and the cyclization of the cysteine to form the salicyl-thiazolinyl-S-PCP1 intermediate at the second site. When this intermediate is released by the action of a thioesterase, it produces the antifungal antibiotic dihydroaeruginoic acid (Dha or hydroxyphenyl-thiazolinyl-carboxylate). This is Pyochelin synthetase PchE from Pseudomonas aeruginosa (strain UCBPP-PA14).